Reading from the N-terminus, the 131-residue chain is MALSDSIGDFLARIRNAQLAMHKTTRVLFSKVNSSILKILKDEGYILDYQKEVVGNIPSFVVKLKYYERSPVISDIVRVSKPGCRCYSKYKDISKAYNGLGIFIISTSKGVMTDYDAHKLKFGGEILCRVF.

It belongs to the universal ribosomal protein uS8 family. As to quaternary structure, part of the 30S ribosomal subunit. Contacts proteins S5 and S12.

Functionally, one of the primary rRNA binding proteins, it binds directly to 16S rRNA central domain where it helps coordinate assembly of the platform of the 30S subunit. The sequence is that of Small ribosomal subunit protein uS8 from Wolbachia sp. subsp. Brugia malayi (strain TRS).